The sequence spans 293 residues: Ribosomal protein L11 methyltransferase (293 aa).

S-adenosyl-L-methionine contacts are provided by T145, G166, D188, and N230.

Belongs to the methyltransferase superfamily. PrmA family.

It is found in the cytoplasm. The catalysed reaction is L-lysyl-[protein] + 3 S-adenosyl-L-methionine = N(6),N(6),N(6)-trimethyl-L-lysyl-[protein] + 3 S-adenosyl-L-homocysteine + 3 H(+). Its function is as follows. Methylates ribosomal protein L11. This chain is Ribosomal protein L11 methyltransferase, found in Yersinia pseudotuberculosis serotype O:3 (strain YPIII).